A 686-amino-acid chain; its full sequence is Glycine--tRNA ligase beta subunit (686 aa).

It belongs to the class-II aminoacyl-tRNA synthetase family. Tetramer of two alpha and two beta subunits.

Its subcellular location is the cytoplasm. It carries out the reaction tRNA(Gly) + glycine + ATP = glycyl-tRNA(Gly) + AMP + diphosphate. In Geobacter metallireducens (strain ATCC 53774 / DSM 7210 / GS-15), this protein is Glycine--tRNA ligase beta subunit.